The following is a 321-amino-acid chain: Digestive cysteine proteinase 3 (321 aa).

The signal sequence occupies residues Met1–Ala16. Residues Ser17–Met106 constitute a propeptide, activation peptide. 3 disulfide bridges follow: Cys127/Cys170, Cys161/Cys203, and Cys261/Cys310. Cys130 is a catalytic residue. Active-site residues include His268 and Asn288.

This sequence belongs to the peptidase C1 family.

With respect to regulation, inhibited by E-64, antipain, leupeptin, heavy metal ions, iodoacetic acid, dithionitrobenzene, p-hydroxymercuri-benzoate; activated by mercaptoethanol and dithiothreitol. In Homarus americanus (American lobster), this protein is Digestive cysteine proteinase 3 (LCP3).